An 83-amino-acid polypeptide reads, in one-letter code: RNA-binding protein Hfq (83 aa).

In terms of domain architecture, Sm spans 10-69; that stretch reads DPFLNALRREHVPVSIYLVNGIKLQGQIESFDQYVVLLRNTVTQMVYKHAISTIVPGRAV.

It belongs to the Hfq family. Homohexamer.

RNA chaperone that binds small regulatory RNA (sRNAs) and mRNAs to facilitate mRNA translational regulation in response to envelope stress, environmental stress and changes in metabolite concentrations. Also binds with high specificity to tRNAs. In Delftia acidovorans (strain DSM 14801 / SPH-1), this protein is RNA-binding protein Hfq.